Here is a 155-residue protein sequence, read N- to C-terminus: Cytochrome c-type biogenesis protein CcmE (155 aa).

Topologically, residues M1–R8 are cytoplasmic. The helical; Signal-anchor for type II membrane protein transmembrane segment at L9–A29 threads the bilayer. The Periplasmic segment spans residues L30–K155. Positions 131 and 135 each coordinate heme.

Belongs to the CcmE/CycJ family.

It localises to the cell inner membrane. Heme chaperone required for the biogenesis of c-type cytochromes. Transiently binds heme delivered by CcmC and transfers the heme to apo-cytochromes in a process facilitated by CcmF and CcmH. This Psychromonas ingrahamii (strain DSM 17664 / CCUG 51855 / 37) protein is Cytochrome c-type biogenesis protein CcmE.